The chain runs to 723 residues: Methionine--tRNA ligase (723 aa).

Positions 12 to 22 match the 'HIGH' region motif; sequence PYANGDIHLGH. The Zn(2+) site is built by Cys-143, Cys-146, Cys-156, and Cys-159. The 'KMSKS' region motif lies at 345 to 349; it reads KMSKS. Position 348 (Lys-348) interacts with ATP. The disordered stretch occupies residues 568-604; it reads PAAATAPAKDAKPAKEAGSQQRHAEKQQHAAGVSETA. One can recognise a tRNA-binding domain in the interval 612 to 723; sequence DFTKVDLRIA…EGAQAGMRVK (112 aa).

This sequence belongs to the class-I aminoacyl-tRNA synthetase family. MetG type 1 subfamily. Homodimer. Zn(2+) is required as a cofactor.

The protein resides in the cytoplasm. It carries out the reaction tRNA(Met) + L-methionine + ATP = L-methionyl-tRNA(Met) + AMP + diphosphate. Functionally, is required not only for elongation of protein synthesis but also for the initiation of all mRNA translation through initiator tRNA(fMet) aminoacylation. This is Methionine--tRNA ligase from Azoarcus sp. (strain BH72).